Consider the following 324-residue polypeptide: tRNA pseudouridine synthase B (324 aa).

Residue His-43 participates in substrate binding. Catalysis depends on Asp-48, which acts as the Nucleophile. Residues Tyr-76, Tyr-179, and Leu-200 each coordinate substrate.

The protein belongs to the pseudouridine synthase TruB family. Type 1 subfamily.

It carries out the reaction uridine(55) in tRNA = pseudouridine(55) in tRNA. Functionally, responsible for synthesis of pseudouridine from uracil-55 in the psi GC loop of transfer RNAs. This is tRNA pseudouridine synthase B from Yersinia pestis bv. Antiqua (strain Nepal516).